The primary structure comprises 170 residues: Ergosterol biosynthetic protein 28 (170 aa).

3 helical membrane passes run 7–27, 116–136, and 141–161; these read FLPE…IISI, TLAY…LFVF, and FGLP…WMPL.

It belongs to the ERG28 family. In terms of assembly, heterotetramer of ERG25, ERG26, ERG27 and ERG28. ERG28 acts as a scaffold to tether ERG27 and other 4,4-demethylation-related enzymes, forming a demethylation enzyme complex, in the endoplasmic reticulum.

Its subcellular location is the endoplasmic reticulum membrane. It functions in the pathway steroid metabolism; ergosterol biosynthesis. In terms of biological role, sterol 24-C-methyltransferase; part of the third module of ergosterol biosynthesis pathway that includes the late steps of the pathway. ERG28 has a role as a scaffold to help anchor the catalytic components of the C-4 demethylation complex ERG25, ERG26 and ERG27 to the endoplasmic reticulum. The third module or late pathway involves the ergosterol synthesis itself through consecutive reactions that mainly occur in the endoplasmic reticulum (ER) membrane. Firstly, the squalene synthase ERG9 catalyzes the condensation of 2 farnesyl pyrophosphate moieties to form squalene, which is the precursor of all steroids. Squalene synthase is crucial for balancing the incorporation of farnesyl diphosphate (FPP) into sterol and nonsterol isoprene synthesis. Secondly, squalene is converted into lanosterol by the consecutive action of the squalene epoxidase ERG1 and the lanosterol synthase ERG7. Then, the delta(24)-sterol C-methyltransferase ERG6 methylates lanosterol at C-24 to produce eburicol. Eburicol is the substrate of the sterol 14-alpha demethylase encoded by CYP51A, CYP51B and CYP51C, to yield 4,4,24-trimethyl ergosta-8,14,24(28)-trienol. CYP51B encodes the enzyme primarily responsible for sterol 14-alpha-demethylation, and plays an essential role in ascospore formation. CYP51A encodes an additional sterol 14-alpha-demethylase, induced on ergosterol depletion and responsible for the intrinsic variation in azole sensitivity. The third CYP51 isoform, CYP51C, does not encode a sterol 14-alpha-demethylase, but is required for full virulence on host wheat ears. The C-14 reductase ERG24 then reduces the C14=C15 double bond which leads to 4,4-dimethylfecosterol. A sequence of further demethylations at C-4, involving the C-4 demethylation complex containing the C-4 methylsterol oxidases ERG25, the sterol-4-alpha-carboxylate 3-dehydrogenase ERG26 and the 3-keto-steroid reductase ERG27, leads to the production of fecosterol via 4-methylfecosterol. ERG28 has a role as a scaffold to help anchor ERG25, ERG26 and ERG27 to the endoplasmic reticulum. The C-8 sterol isomerase ERG2 then catalyzes the reaction which results in unsaturation at C-7 in the B ring of sterols and thus converts fecosterol to episterol. The sterol-C5-desaturases ERG3A and ERG3BB then catalyze the introduction of a C-5 double bond in the B ring to produce 5-dehydroepisterol. The C-22 sterol desaturases ERG5A and ERG5B further convert 5-dehydroepisterol into ergosta-5,7,22,24(28)-tetraen-3beta-ol by forming the C-22(23) double bond in the sterol side chain. Finally, ergosta-5,7,22,24(28)-tetraen-3beta-ol is substrate of the C-24(28) sterol reductase ERG4 to produce ergosterol. The protein is Ergosterol biosynthetic protein 28 of Gibberella zeae (strain ATCC MYA-4620 / CBS 123657 / FGSC 9075 / NRRL 31084 / PH-1) (Wheat head blight fungus).